The sequence spans 576 residues: MLSDIEISRQSPRLPIHALAERLAIPSHQLHPYGHYKGKLSLELLKSLPKPAGKLVLVSAITPTPLGEGKTVTTLGLSMGLNHIGQPSIATIRQPSLGPVFGVKGGAAGGGHAQVVPMEEMNLHLTGDFHALTAAHNLAAAALDARLFHERKLGDQFSARTGLQRLDIDADNILWPRTLDMNDRALRHLTIGQGNAADGVERSDRFVITAASELMAILALASDLKDLRQRIGRIQLARDLRGKPITAEQLEVAGAMTVLLKEALQPTLMQTTEQTSVLVHAGPFANIAHGNSSVIADRMALGLTDYVVTEAGFGSDMGLEKFFNIKHRQSGITPACVVLVATVRGLKANSGLLDIRPGQPLPESLLREDLPTLEQGCANLGWHIANARRYGVPVVVAINRFPTDSEAELALLARAALRAGACGSAISSAFTQGGAGASELAQAVVAACEQPGKVKLLYPDQASLGAKLATLVECGYGGRGVQLSDKARQQLAQLSAEGWDHLPVCVAKTPLSISHDPALKGVPTDFEVPIEEVKLCAGAGFVYALAGPIMTMPGLGSLPAYRHIDIDDNGEIVGLS.

64 to 71 (TPLGEGKT) contributes to the ATP binding site.

This sequence belongs to the formate--tetrahydrofolate ligase family.

It carries out the reaction (6S)-5,6,7,8-tetrahydrofolate + formate + ATP = (6R)-10-formyltetrahydrofolate + ADP + phosphate. Its pathway is one-carbon metabolism; tetrahydrofolate interconversion. The sequence is that of Formate--tetrahydrofolate ligase from Aeromonas hydrophila subsp. hydrophila (strain ATCC 7966 / DSM 30187 / BCRC 13018 / CCUG 14551 / JCM 1027 / KCTC 2358 / NCIMB 9240 / NCTC 8049).